The sequence spans 335 residues: Ketol-acid reductoisomerase (NADP(+)) 2 (335 aa).

In terms of domain architecture, KARI N-terminal Rossmann spans 1 to 180; the sequence is MKTYYEQDAN…GCTRAGVIET (180 aa). NADP(+)-binding positions include 24-27, Arg47, Ser51, and 81-84; these read YGSQ and DEQQ. The active site involves His106. An NADP(+)-binding site is contributed by Gly132. The region spanning 181-326 is the KARI C-terminal knotted domain; that stretch reads TFQEETETDL…EELREMMSWI (146 aa). Mg(2+) contacts are provided by Asp189, Glu193, Glu225, and Glu229. Ser250 is a binding site for substrate.

Belongs to the ketol-acid reductoisomerase family. It depends on Mg(2+) as a cofactor.

It catalyses the reaction (2R)-2,3-dihydroxy-3-methylbutanoate + NADP(+) = (2S)-2-acetolactate + NADPH + H(+). The catalysed reaction is (2R,3R)-2,3-dihydroxy-3-methylpentanoate + NADP(+) = (S)-2-ethyl-2-hydroxy-3-oxobutanoate + NADPH + H(+). The protein operates within amino-acid biosynthesis; L-isoleucine biosynthesis; L-isoleucine from 2-oxobutanoate: step 2/4. It participates in amino-acid biosynthesis; L-valine biosynthesis; L-valine from pyruvate: step 2/4. Involved in the biosynthesis of branched-chain amino acids (BCAA). Catalyzes an alkyl-migration followed by a ketol-acid reduction of (S)-2-acetolactate (S2AL) to yield (R)-2,3-dihydroxy-isovalerate. In the isomerase reaction, S2AL is rearranged via a Mg-dependent methyl migration to produce 3-hydroxy-3-methyl-2-ketobutyrate (HMKB). In the reductase reaction, this 2-ketoacid undergoes a metal-dependent reduction by NADPH to yield (R)-2,3-dihydroxy-isovalerate. This is Ketol-acid reductoisomerase (NADP(+)) 2 from Bacillus anthracis.